Reading from the N-terminus, the 1474-residue chain is SH3 and multiple ankyrin repeat domains protein 2 (1474 aa).

Residues 66–76 (LSPQLLQQTPS) show a composition bias toward polar residues. A disordered region spans residues 66–125 (LSPQLLQQTPSKPDGATKSLGSYAPGPRSRSPSLNRLGGAGEDGKRPQPPHWHVGSPFTP). Residues 148 to 207 (VPGRLFVAIKPYQPQVDGEIPLHRGDRVKVLSIGEGGFWEGSARGHIGWFPAECVEEVQC) enclose the SH3 domain. At Gln162 the chain carries Phosphoserine. In terms of domain architecture, PDZ spans 248–342 (TVVLQKKDNE…HLVLKVVTVT (95 aa)). Ser373 is subject to Phosphoserine. The tract at residues 392–413 (RKKKDKPEEIVPASKPSRTAEN) is disordered. A Phosphoserine modification is found at Ser457. Thr486 bears the Phosphothreonine mark. The interval 504–534 (LSMPDTSEDIPPPPQSVPPSPPPPSPTTYNC) is disordered. Positions 513–529 (IPPPPQSVPPSPPPPSP) are enriched in pro residues. The residue at position 586 (Ser586) is a Phosphoserine. 3 disordered regions span residues 659–920 (TIIV…ADDK), 947–995 (PVAG…PAAA), and 1057–1153 (PALA…ESMD). Positions 666-678 (STSSSGKSSQGSS) are enriched in low complexity. Positions 711–722 (VRDREKRLEARR) are enriched in basic and acidic residues. Residue Ser724 is modified to Phosphoserine. Over residues 783–795 (LGGGEAGAQGEAG) the composition is skewed to gly residues. Composition is skewed to low complexity over residues 811–823 (PAAA…PASP) and 833–846 (RLLD…LALS). 2 stretches are compositionally biased toward basic and acidic residues: residues 847–868 (ARDR…KADL) and 899–920 (RRQE…ADDK). Thr903 carries the phosphothreonine modification. Residues 1075–1085 (SLNSSQPANST) show a composition bias toward polar residues. Residues 1119-1130 (VDSRSSSDHHLE) are compositionally biased toward basic and acidic residues. Residues 1131-1151 (TTSTISTVSSISTLSSEGGES) show a composition bias toward low complexity. An SH3-binding motif is present at residues 1169-1175 (PPVPPKP). Disordered regions lie at residues 1195–1216 (EDTD…SAQA) and 1260–1401 (NRGK…ISNK). Residues 1202–1212 (IPPPAPPPPPG) are compositionally biased toward pro residues. The segment covering 1291-1305 (STVSGTRSTTVTFTV) has biased composition (low complexity). The O-linked (GlcNAc) threonine glycan is linked to Thr1292. Positions 1307–1317 (PGTSQPITLQS) are enriched in polar residues. A phosphoserine mark is found at Ser1334 and Ser1338. Low complexity-rich tracts occupy residues 1352–1363 (SAAAASPSPTLS) and 1385–1399 (RSRS…QPIS). The 64-residue stretch at 1411–1474 (WTKPDVADWL…ERALKQLLDR (64 aa)) folds into the SAM domain.

This sequence belongs to the SHANK family. Is part of a complex with DLG4/PSD-95 and DLGAP1/GKAP. Interacts with CTTN/cortactin SH3 domain, DLGAP1/GKAP and alpha-latrotoxin receptor 1. Interacts with DNM2, DBNL, GRID2, BAIAP2, SLC9A3, PLCB3 and CFTR. Interacts with ABI1 (via SH3 domain). Interacts (via proline-rich region) with PDE4D isoform 5 (via N-terminal region). Interacts with PDE4D isoform 33, isoform 4, isoform 7, isoform 8 and isoform 9 but not isoform 32 and isoform 6. Interacts weakly with PDE4D isoform 31. Interacts with ABI1. As to expression, expressed in epithelial cells (at protein level). All isoforms except isoform 7 are expressed predominantly in brain, with highest levels in olfactory bulb, cerebral cortex, cerebellum, central gray matter and hippocampus. Moderate levels of expression are seen in the caudate putamen, thalamic nuclei and brain stem. In cerebellum primarily expressed in Purkinje cells. Isoform 7 is not expressed in brain but expressed in liver, cholangiocytes and thymus. Isoform 7 is present in pancreas, colonic mucosa and thymocytes (at protein level).

It is found in the apical cell membrane. Its subcellular location is the cytoplasm. It localises to the synapse. The protein localises to the postsynaptic density. The protein resides in the cell projection. It is found in the growth cone. Its subcellular location is the dendritic spine. In terms of biological role, seems to be an adapter protein in the postsynaptic density (PSD) of excitatory synapses that interconnects receptors of the postsynaptic membrane including NMDA-type and metabotropic glutamate receptors, and the actin-based cytoskeleton. May play a role in the structural and functional organization of the dendritic spine and synaptic junction. This is SH3 and multiple ankyrin repeat domains protein 2 (Shank2) from Rattus norvegicus (Rat).